The primary structure comprises 407 residues: Spore germination protein KC (407 aa).

An N-terminal signal peptide occupies residues 1-20; the sequence is MVRKCLLAVLMLLSVIVLPG. C21 carries N-palmitoyl cysteine lipidation. The S-diacylglycerol cysteine moiety is linked to residue C21.

It belongs to the GerABKC lipoprotein family.

Its subcellular location is the cell membrane. Functionally, involved in the germination response to the combination of glucose, fructose, L-asparagine, and KCl. This chain is Spore germination protein KC (gerKC), found in Bacillus subtilis (strain 168).